Here is a 556-residue protein sequence, read N- to C-terminus: MSVSAFNRRWAAVILEALTRHGVRHICIAPGSRSTPLTLAAAENSAFIHHTHFDERGLGHLALGLAKVSKQPVAVIVTSGTAVANLYPALIEAGLTGEKLILLTADRPPELIDCGANQAIRQPGMFASHPTHSISLPRPTQDIPARWLVSTIDHALGTLHSGGVHINCPFAEPLYGEMDDTGLSWQQRLGDWWQDDKPWLREAPRLESEKQRDWFFWRQKRGVVVAGRMSAEEGKKVALWAQTLGWPLIGDVLSQTGQPLPCADLWLGNAKATSELQQAQIVVQLGSSLTGKRLLQWQASCEPEEYWIVDDIEGRLDPAHHRGRRLIANIADWLELHPAEKRQPWCVEIPRLAEQAMQAVIARRDAFGEAQLAHRISDYLPEQGQLFVGNSLVVRLIDALSQLPAGYPVYSNRGASGIDGLLSTAAGVQRASGKPTLAIVGDLSALYDLNALALLRQVSAPLILIVVNNNGGQIFSLLPTPKSERERFYLMPQNVHFEHAAAMFELKYHRPQNWQELETALADAWRTPTTTVIEMVVNDTDGAQTLQQLLAQVSHL.

The protein belongs to the TPP enzyme family. MenD subfamily. Homodimer. It depends on Mg(2+) as a cofactor. Requires Mn(2+) as cofactor. Thiamine diphosphate is required as a cofactor.

The enzyme catalyses isochorismate + 2-oxoglutarate + H(+) = 5-enolpyruvoyl-6-hydroxy-2-succinyl-cyclohex-3-ene-1-carboxylate + CO2. It functions in the pathway quinol/quinone metabolism; 1,4-dihydroxy-2-naphthoate biosynthesis; 1,4-dihydroxy-2-naphthoate from chorismate: step 2/7. The protein operates within quinol/quinone metabolism; menaquinone biosynthesis. Its function is as follows. Catalyzes the thiamine diphosphate-dependent decarboxylation of 2-oxoglutarate and the subsequent addition of the resulting succinic semialdehyde-thiamine pyrophosphate anion to isochorismate to yield 2-succinyl-5-enolpyruvyl-6-hydroxy-3-cyclohexene-1-carboxylate (SEPHCHC). In Shigella sonnei (strain Ss046), this protein is 2-succinyl-5-enolpyruvyl-6-hydroxy-3-cyclohexene-1-carboxylate synthase.